We begin with the raw amino-acid sequence, 355 residues long: Probable aldo-keto reductase 3 (355 aa).

Y70 serves as the catalytic Proton donor. H138 contacts substrate. Position 217 to 227 (217 to 227) interacts with NADP(+); the sequence is SPLGRGFFSSG.

This sequence belongs to the aldo/keto reductase family.

This Oryza sativa subsp. japonica (Rice) protein is Probable aldo-keto reductase 3.